Here is a 111-residue protein sequence, read N- to C-terminus: Protein EARLY FLOWERING 4 (111 aa).

Residues 1-26 are disordered; it reads MKRNGETKRRRNVAEEAEQGEDPAMW. The residue at position 45 (Ser-45) is a Phosphoserine. The interval 90-111 is disordered; sequence FSSGFHGGKNGHDGGGAAGTRA. Residues 94 to 111 are compositionally biased toward gly residues; it reads FHGGKNGHDGGGAAGTRA.

This sequence belongs to the EARLY FLOWERING 4 family. Homodimer. Interacts with ELF3.

The protein resides in the nucleus. Component of the central CCA1/LHY-TOC1 feedback loop in the circadian clock that promotes clock accuracy and is required for sustained rhythms in the absence of daily light/dark cycles. Part of a corepressor complex consisting of ELF4, ELF3, and LUX involved in the transcriptional regulation of APRR9. Increases ELF3 nuclear distribution and localization in nuclear bodies. Required for responsiveness to continuous red, by regulating phytochrome B (phyB) signaling (including during seedling de-etiolation) and gene expression. Mediates both entrainment to an environmental cycle and circadian rhythm sustainability under constant conditions. Controls flowering time. Necessary for light-induced expression of both CCA1 and LHY. In Arabidopsis thaliana (Mouse-ear cress), this protein is Protein EARLY FLOWERING 4 (ELF4).